Here is a 693-residue protein sequence, read N- to C-terminus: Golgin subfamily A member 6C (693 aa).

Disordered regions lie at residues 20–71 (NKLA…DSQY), 497–547 (LPGE…GTEQ), and 629–693 (NPAD…MQDT). Residues 73 to 611 (ELAVALESSS…KLLELQELVL (539 aa)) are a coiled coil. Basic and acidic residues predominate over residues 537 to 547 (LPKEKADGTEQ). A compositionally biased stretch (polar residues) spans 679–693 (PVQQIVQLSPVMQDT).

The protein belongs to the GOLGA6 family.

The sequence is that of Golgin subfamily A member 6C (GOLGA6C) from Homo sapiens (Human).